Consider the following 585-residue polypeptide: MARPDPSAPPSLLLLLLAQLVGRAAAASKAPVCQEITVPMCRGIGYNLTHMPNQFNHDTQDEAGLEVHQFWPLVEIQCSPDLRFFLCSMYTPICLPDYHKPLPPCRSVCERAKAGCSPLMRQYGFAWPERMSCDRLPVLGRDAEVLCMDYNRSEATTAPPRPFPAKPTLPGPPGAPASGGECPAGGPFVCKCREPFVPILKESHPLYNKVRTGQVPNCAVPCYQPSFSADERTFATFWIGLWSVLCFISTSTTVATFLIDMERFRYPERPIIFLSACYLCVSLGFLVRLVVGHASVACSREHNHIHYETTGPALCTIVFLLVYFFGMASSIWWVILSLTWFLAAGMKWGNEAIAGYAQYFHLAAWLIPSVKSITALALSSVDGDPVAGICYVGNQNLNSLRGFVLGPLVLYLLVGTLFLLAGFVSLFRIRSVIKQGGTKTDKLEKLMIRIGIFTLLYTVPASIVVACYLYEQHYRESWEAALTCACPGHDTGQPRAKPEYWVLMLKYFMCLVVGITSGVWIWSGKTVESWRRFTSRCCCRPRRGHKSGGAMAAGDYPEASAALTGRTGPPGPAATYHKQVSLSHV.

Positions 1–26 (MARPDPSAPPSLLLLLLAQLVGRAAA) are cleaved as a signal peptide. At 27-238 (ASKAPVCQEI…ADERTFATFW (212 aa)) the chain is on the extracellular side. Positions 28-150 (SKAPVCQEIT…RDAEVLCMDY (123 aa)) constitute an FZ domain. 5 disulfides stabilise this stretch: Cys-33-Cys-94, Cys-41-Cys-87, Cys-78-Cys-116, Cys-105-Cys-147, and Cys-109-Cys-133. A glycan (N-linked (GlcNAc...) asparagine) is linked at Asn-47. A glycan (N-linked (GlcNAc...) asparagine) is linked at Asn-151. The segment at 156 to 179 (TTAPPRPFPAKPTLPGPPGAPASG) is disordered. The segment covering 159–175 (PPRPFPAKPTLPGPPGA) has biased composition (pro residues). The chain crosses the membrane as a helical span at residues 239 to 259 (IGLWSVLCFISTSTTVATFLI). Over 260-270 (DMERFRYPERP) the chain is Cytoplasmic. The chain crosses the membrane as a helical span at residues 271–291 (IIFLSACYLCVSLGFLVRLVV). Over 292-315 (GHASVACSREHNHIHYETTGPALC) the chain is Extracellular. A helical membrane pass occupies residues 316–336 (TIVFLLVYFFGMASSIWWVIL). The Cytoplasmic portion of the chain corresponds to 337 to 358 (SLTWFLAAGMKWGNEAIAGYAQ). The helical transmembrane segment at 359-379 (YFHLAAWLIPSVKSITALALS) threads the bilayer. Over 380–402 (SVDGDPVAGICYVGNQNLNSLRG) the chain is Extracellular. Residues 403 to 423 (FVLGPLVLYLLVGTLFLLAGF) form a helical membrane-spanning segment. At 424-449 (VSLFRIRSVIKQGGTKTDKLEKLMIR) the chain is on the cytoplasmic side. Residues 450–470 (IGIFTLLYTVPASIVVACYLY) form a helical membrane-spanning segment. At 471-500 (EQHYRESWEAALTCACPGHDTGQPRAKPEY) the chain is on the extracellular side. Residues 501 to 521 (WVLMLKYFMCLVVGITSGVWI) form a helical membrane-spanning segment. Topologically, residues 522-585 (WSGKTVESWR…YHKQVSLSHV (64 aa)) are cytoplasmic. The Lys-Thr-X-X-X-Trp motif, mediates interaction with the PDZ domain of Dvl family members signature appears at 525-530 (KTVESW). Positions 583 to 585 (SHV) match the PDZ-binding motif.

It belongs to the G-protein coupled receptor Fz/Smo family. Binding of unsaturated fatty acid molecules (via FZ domain) promotes homodimerization. Interacts with WNT2B. Interacts with WNT3A. Interacts with WNT7A. Interacts with GOPC. Ubiquitinated by RNF43 and ZNRF3, leading to its degradation by the proteasome.

The protein localises to the cell membrane. The protein resides in the golgi apparatus membrane. It localises to the synapse. It is found in the perikaryon. Its subcellular location is the cell projection. The protein localises to the dendrite. The protein resides in the axon. Its function is as follows. Receptor for Wnt proteins. Functions in the canonical Wnt/beta-catenin signaling pathway. In vitro activates WNT2, WNT10B, WNT5A, but not WNT2B or WNT4 signaling. In neurons, activation by WNT7A promotes formation of synapses. May be involved in transduction and intercellular transmission of polarity information during tissue morphogenesis and/or in differentiated tissues. Plays a role in yolk sac angiogenesis and in placental vascularization. Plays a role in ocular development. The protein is Frizzled-5 (FZD5) of Homo sapiens (Human).